Reading from the N-terminus, the 201-residue chain is Probable GTP-binding protein EngB (201 aa).

The EngB-type G domain occupies Thr-22–Glu-197. Residues Gly-30–Ser-37, Gly-57–Leu-61, Asp-75–Gly-78, Thr-142–Asp-145, and Ile-175–Ser-178 contribute to the GTP site. Mg(2+) is bound by residues Ser-37 and Thr-59.

This sequence belongs to the TRAFAC class TrmE-Era-EngA-EngB-Septin-like GTPase superfamily. EngB GTPase family. Mg(2+) is required as a cofactor.

In terms of biological role, necessary for normal cell division and for the maintenance of normal septation. This Bacteroides fragilis (strain ATCC 25285 / DSM 2151 / CCUG 4856 / JCM 11019 / LMG 10263 / NCTC 9343 / Onslow / VPI 2553 / EN-2) protein is Probable GTP-binding protein EngB.